The sequence spans 482 residues: Histone deacetylase 1 (482 aa).

Residues 9 to 321 (RKVCYYYDGD…WTYETAVALD (313 aa)) form a histone deacetylase region. Positions 27 and 31 each coordinate 1D-myo-inositol 1,4,5,6-tetrakisphosphate. The residue at position 74 (K74) is an N6-acetyllysine; alternate. A Glycyl lysine isopeptide (Lys-Gly) (interchain with G-Cter in SUMO2); alternate cross-link involves residue K74. The active site involves H141. Zn(2+)-binding residues include D176 and H178. K220 is modified (N6-acetyllysine). C261 carries the post-translational modification S-nitrosocysteine. A Zn(2+)-binding site is contributed by D264. R270 provides a ligand contact to 1D-myo-inositol 1,4,5,6-tetrakisphosphate. Residue C273 is modified to S-nitrosocysteine. Residues 390 to 400 (PEESGDEDEDD) show a composition bias toward acidic residues. Residues 390-482 (PEESGDEDED…KGVKEEVKLA (93 aa)) are disordered. Phosphoserine occurs at positions 393, 406, and 409. Over residues 401-416 (PDKRISICSSDKRIAC) the composition is skewed to basic and acidic residues. A compositionally biased stretch (acidic residues) spans 417–427 (EEEFSDSEEEG). Phosphoserine; by CK2 occurs at positions 421 and 423. An N6-methylated lysine; by EHMT2 modification is found at K432. K438 participates in a covalent cross-link: Glycyl lysine isopeptide (Lys-Gly) (interchain with G-Cter in SUMO2). Positions 443–482 (VKTEDEKEKDPEEKKEVTEEEKTKEEKPEAKGVKEEVKLA) are enriched in basic and acidic residues. A Glycyl lysine isopeptide (Lys-Gly) (interchain with G-Cter in SUMO2); alternate cross-link involves residue K444. K444 participates in a covalent cross-link: Glycyl lysine isopeptide (Lys-Gly) (interchain with G-Cter in SUMO); alternate. Residues K456, K457, and K473 each participate in a glycyl lysine isopeptide (Lys-Gly) (interchain with G-Cter in SUMO2) cross-link. K476 is covalently cross-linked (Glycyl lysine isopeptide (Lys-Gly) (interchain with G-Cter in SUMO2); alternate). K476 participates in a covalent cross-link: Glycyl lysine isopeptide (Lys-Gly) (interchain with G-Cter in SUMO); alternate. A Glycyl lysine isopeptide (Lys-Gly) (interchain with G-Cter in SUMO2) cross-link involves residue K480.

This sequence belongs to the histone deacetylase family. HD type 1 subfamily. In terms of assembly, part of the core histone deacetylase (HDAC) complex composed of HDAC1, HDAC2, RBBP4 and RBBP7, the core complex associates with SIN3, SAP18 and SAP30 to form the SIN3 HDAC complex. Component of the nucleosome remodeling and deacetylase (NuRD) repressor complex, composed of core proteins MTA1, MTA2, MTA3, RBBP4, RBBP7, HDAC1, HDAC2, MBD2, MBD3, and peripherally associated proteins CDK2AP1, CDK2AP2, GATAD2A, GATAD2B, CHD3, CHD4 and CHD5. The exact stoichiometry of the NuRD complex is unknown, and some subunits such as MBD2 and MBD3, GATAD2A and GATAD2B, and CHD3, CHD4 and CHD5 define mutually exclusive NuRD complexes. Component of a BHC histone deacetylase complex that contains HDAC1, HDAC2, HMG20B/BRAF35, KDM1A, RCOR1/CoREST and PHF21A/BHC80. The BHC complex may also contain ZMYM2, ZNF217, ZMYM3, GSE1 and GTF2I. Component of a mSin3A corepressor complex that contains SIN3A, SAP130, SUDS3/SAP45, ARID4B/SAP180, HDAC1 and HDAC2. Component of the SIN3B complex, which includes SIN3B, HDAC1, PHF12 and MORF4L1. Found in a trimeric complex with APBB1 and TSHZ3; the interaction between HDAC1 and APBB1 is mediated by TSHZ3. Forms a complex comprising APPL1, RUVBL2, APPL2, CTNNB1 and HDAC2. Component of a RCOR/GFI/KDM1A/HDAC complex. Part of a complex composed of TRIM28, HDAC1, HDAC2 and EHMT2. Part of a complex containing at least CDYL, MIER1, MIER2, HDAC1 and HDAC2. The large PER complex involved in the histone deacetylation is composed of at least HDAC1, PER2, SFPQ and SIN3A. Associates with the 9-1-1 complex; interacts with HUS1. Found in a complex with DNMT3A and HDAC7. Found in a complex with YY1, SIN3A and GON4L. Identified in a histone deacetylase complex that contains DNTTIP1, HDAC1 and MIDEAS; this complex assembles into a tetramer that contains four copies of each protein chain. Found in a complex composed of at least SINHCAF, SIN3A, HDAC1, SAP30, RBBP4, OGT and TET1. Interacts with GFI1; the interaction is direct. Interacts directly with GFI1B. Interacts with TSHZ3 (via N-terminus); the interaction is direct. Interacts with APEX1; the interaction is not dependent on the acetylated status of APEX1. Interacts with BANP. Interacts with BAZ2A/TIP5. Interacts with BCL6. Interacts with BCOR. Interacts with BHLHE40/DEC1. Interacts with BRCC3; this interaction is enhanced in the presence of PWWP2B. Interacts with BRMS1. Interacts with BRMS1L. Interacts with C10orf90/FATS (via its N-terminal); the interaction prevents binding of HDAC1 to CDKN1A/p21 and facilitates the acetylation and stabilization of CDKN1A/p21. Interacts with CBFA2T3. Interacts with CCAR2. Interacts with CDK2AP1. Interacts with CHD3. Interacts with CHD4. Interacts with CHFR. Interacts with CIART. Interacts with CDKN1A/p21. Interacts with CDK5 complexed to CDK5R1 (p25). Interacts with CRY1. Interacts with DAXX. Interacts with DDIT3/CHOP. Interacts with DDX5. Interacts with DHX36; this interaction occurs in a RNA-dependent manner. Interacts with DNMT1. Interacts with DNTTIP1. Interacts with E4F1. Interacts with EP300. Interacts with ERCC6. Interacts with GATAD2A. Interacts with HCFC1. Interacts with HDAC9. Interacts with HUS1. Interacts with INSM1. Interacts with KDM4A. Interacts with KDM5A; this interaction impairs histone deacetylation. Interacts with KDM5B. Interacts with KLF1. Interacts with MBD3L2. Interacts with MIER1. Interacts with NFE4. Interacts with NR4A2/NURR1. Interacts with NR1D2 (via C-terminus). Interacts with NRIP1. Interacts with NSD2. Interacts with PACS2. Interacts with PHB2. Interacts with PPHLN1. Interacts with PRDM6. Interacts with PRDM16. Interacts with PWWP2A in a MTA1-dependent manner. Interacts with PWWP2B. Interacts with RB1. Interacts with RERE. Interacts with SANBR (via the BTB domain). Interacts with SAMSN1. Interacts with SAP30L. Interacts with SETDB1. Interacts with SIN3A. Interacts with SMAD3. Interacts with SMAD4; positively regulated by ZBTB7A. Interacts with SMARCAD1. Interacts with SMARCA4/BRG1. Interacts with SMYD2. Interacts with SMYD4 (via MYND-type zinc finger). Interacts with SP1; the interaction deacetylates SP1 and regulates its transcriptional activity. Interacts with SP3; the interaction deacetylates SP3 and regulates its transcriptional activity. In vitro, C(18) ceramides increase this interaction and the subsequent SP3 deacetylation and SP3-mediated repression of the TERT promoter. Interacts with SPEN/MINT. Interacts with SPHK2. Interacts with SUV39H1. Interacts with TGIF. Interacts with TGIF2. Interacts with TRAF6. Interacts with TRIM28; the interaction recruits HDAC1 to E2F1 and inhibits its acetylation. Interacts with TSC22D3 isoform 1; this interaction affects HDAC1 activity on MYOG promoter and thus inhibits MYOD1 transcriptional activity. Interacts with UHRF1. Interacts with UHRF2. Interacts with ZBTB7A. Interacts with ZMYND8. Interacts with ZMYND15. Interacts with ZNF431. Interacts with ZNF516; this interaction is enhanced in the presence of PWWP2B. Interacts with ZNF541. Interacts with ZNF638. Interacts with ZNHIT1. Interacts with the non-histone region of MACROH2A1. Identified in a complex with HDAC2, KCTD19, DNTTIP1 and ZNF541. Interacts with VRK1. (Microbial infection) Interacts with SV40 large T antigen. Zn(2+) is required as a cofactor. Post-translationally, sumoylated on Lys-444 and Lys-476; which promotes enzymatic activity. Desumoylated by SENP1. In terms of processing, phosphorylation on Ser-421 and Ser-423 promotes enzymatic activity and interactions with NuRD and SIN3 complexes. Phosphorylated by CDK5. Ubiquitinated by CHFR, leading to its degradation by the proteasome. Ubiquitinated by KCTD11, leading to proteasomal degradation. As to expression, ubiquitous, with higher levels in heart, pancreas and testis, and lower levels in kidney and brain.

The protein resides in the nucleus. The enzyme catalyses N(6)-acetyl-L-lysyl-[histone] + H2O = L-lysyl-[histone] + acetate. The catalysed reaction is N(6)-acetyl-L-lysyl-[protein] + H2O = L-lysyl-[protein] + acetate. It catalyses the reaction N(6)-(2E)-butenoyl-L-lysyl-[protein] + H2O = (2E)-2-butenoate + L-lysyl-[protein]. It carries out the reaction N(6)-[(S)-lactoyl]-L-lysyl-[protein] + H2O = (S)-lactate + L-lysyl-[protein]. Its activity is regulated as follows. Inositol tetraphosphate (1D-myo-inositol 1,4,5,6-tetrakisphosphate) may act as an intermolecular glue between HDAC1 and N-Cor repressor complex components. Its function is as follows. Histone deacetylase that catalyzes the deacetylation of lysine residues on the N-terminal part of the core histones (H2A, H2B, H3 and H4). Histone deacetylation gives a tag for epigenetic repression and plays an important role in transcriptional regulation, cell cycle progression and developmental events. Histone deacetylases act via the formation of large multiprotein complexes. Acts as a component of the histone deacetylase NuRD complex which participates in the remodeling of chromatin. As part of the SIN3B complex is recruited downstream of the constitutively active genes transcriptional start sites through interaction with histones and mitigates histone acetylation and RNA polymerase II progression within transcribed regions contributing to the regulation of transcription. Also functions as a deacetylase for non-histone targets, such as NR1D2, RELA, SP1, SP3, STAT3 and TSHZ3. Deacetylates SP proteins, SP1 and SP3, and regulates their function. Component of the BRG1-RB1-HDAC1 complex, which negatively regulates the CREST-mediated transcription in resting neurons. Upon calcium stimulation, HDAC1 is released from the complex and CREBBP is recruited, which facilitates transcriptional activation. Deacetylates TSHZ3 and regulates its transcriptional repressor activity. Deacetylates 'Lys-310' in RELA and thereby inhibits the transcriptional activity of NF-kappa-B. Deacetylates NR1D2 and abrogates the effect of KAT5-mediated relieving of NR1D2 transcription repression activity. Component of a RCOR/GFI/KDM1A/HDAC complex that suppresses, via histone deacetylase (HDAC) recruitment, a number of genes implicated in multilineage blood cell development. Involved in CIART-mediated transcriptional repression of the circadian transcriptional activator: CLOCK-BMAL1 heterodimer. Required for the transcriptional repression of circadian target genes, such as PER1, mediated by the large PER complex or CRY1 through histone deacetylation. In addition to protein deacetylase activity, also has protein-lysine deacylase activity: acts as a protein decrotonylase and delactylase by mediating decrotonylation ((2E)-butenoyl) and delactylation (lactoyl) of histones, respectively. The protein is Histone deacetylase 1 of Homo sapiens (Human).